The following is a 233-amino-acid chain: Large ribosomal subunit protein uL3 (233 aa).

Belongs to the universal ribosomal protein uL3 family. As to quaternary structure, part of the 50S ribosomal subunit. Forms a cluster with proteins L14 and L19.

Functionally, one of the primary rRNA binding proteins, it binds directly near the 3'-end of the 23S rRNA, where it nucleates assembly of the 50S subunit. This Ureaplasma parvum serovar 3 (strain ATCC 27815 / 27 / NCTC 11736) protein is Large ribosomal subunit protein uL3.